Here is a 553-residue protein sequence, read N- to C-terminus: Putative transport protein YidE (553 aa).

5 helical membrane passes run I4–V24, G28–S48, F65–S85, L95–F115, and M158–L178. RCK C-terminal domains are found at residues Q191–Q276 and D279–N361. Helical transmembrane passes span M371–V391, G393–L413, I439–V459, L464–L484, Y493–A513, and L533–G553.

Belongs to the AAE transporter (TC 2.A.81) family. YidE subfamily.

The protein localises to the cell membrane. This Shigella boydii serotype 18 (strain CDC 3083-94 / BS512) protein is Putative transport protein YidE.